The chain runs to 144 residues: Granulocyte-macrophage colony-stimulating factor (144 aa).

The signal sequence occupies residues 1 to 17 (MWLQNLLFLGTVVCSIS). Residue Ser-22 is glycosylated (O-linked (GalNAc...) serine). O-linked (GalNAc...) threonine glycosylation is present at Thr-27. The N-linked (GlcNAc...) asparagine glycan is linked to Asn-44. Cystine bridges form between Cys-71/Cys-113 and Cys-105/Cys-138.

This sequence belongs to the GM-CSF family. Monomer. The signaling GM-CSF receptor complex is a dodecamer of two head-to-head hexamers of two alpha, two beta, and two ligand subunits.

The protein localises to the secreted. In terms of biological role, cytokine that stimulates the growth and differentiation of hematopoietic precursor cells from various lineages, including granulocytes, macrophages, eosinophils and erythrocytes. The polypeptide is Granulocyte-macrophage colony-stimulating factor (CSF2) (Canis lupus familiaris (Dog)).